The following is a 291-amino-acid chain: MAGVILLLLSLCVGYIAYYFFRTESMNKESVRGKRVLITGSSTGLGEQIAYEFARMGAHIMITARRLQQLQEVASQCMKLGAASAHYVASDMGNLESAQSVAQEAVVKLGGLDYLVLNHIGGSGGFGFFKGDMDPVVGSTTVNFLSYVQLTSSALSALQESQGSIVVISSMSGRIGAPFTTSYCASKFALEGFYSSLRREFALQNSKMSVTVAVLGYIDTENAVKKVGNKVSMTASSKEDCAREVVKAAVLQQPEIFYPYWGIKPFVLLRDWFPGLVAKILDKCYILENIQ.

Positions 1-17 are cleaved as a signal peptide; sequence MAGVILLLLSLCVGYIA. Residues 40 to 66, 91 to 92, and 118 to 120 each bind NADP(+); these read GSST…TARR, DM, and NHI. Residue S170 participates in substrate binding. Y183 (proton acceptor) is an active-site residue. Residues 183–187 and 216–222 each bind NADP(+); these read YCASK and GYIDTEN.

Belongs to the short-chain dehydrogenases/reductases (SDR) family.

It is found in the secreted. It catalyses the reaction cortisone + NADPH + H(+) = cortisol + NADP(+). Unidirectional NADP(+)-dependent cortisol dehydrogenase (in vitro). In Xenopus laevis (African clawed frog), this protein is Hydroxysteroid 11-beta-dehydrogenase 1-like protein B (hsd11b1l-b).